A 1162-amino-acid polypeptide reads, in one-letter code: Topoisomerase 1-associated factor 1 (1162 aa).

Disordered stretches follow at residues 977–1017 (TEGR…EANA) and 1127–1162 (TQVVSSEEYSSHPLEEEVTSEQRKRKKPRIESDTEY). A compositionally biased stretch (basic residues) spans 993 to 1003 (QRSKGKRKAIA).

The protein belongs to the timeless family. As to quaternary structure, component of the fork protection complex (FPC) consisting of TOF1 and CSM3.

Its subcellular location is the nucleus. In terms of biological role, forms a fork protection complex (FPC) with CSM3 and which is required for chromosome segregation during meiosis and DNA damage repair. FPC coordinates leading and lagging strand synthesis and moves with the replication fork. FPC stabilizes replication forks in a configuration that is recognized by replication checkpoint sensors. In Kluyveromyces lactis (strain ATCC 8585 / CBS 2359 / DSM 70799 / NBRC 1267 / NRRL Y-1140 / WM37) (Yeast), this protein is Topoisomerase 1-associated factor 1 (TOF1).